We begin with the raw amino-acid sequence, 341 residues long: Ribosomal RNA small subunit methyltransferase C (341 aa).

The protein belongs to the methyltransferase superfamily. RsmC family. In terms of assembly, monomer.

The protein resides in the cytoplasm. It catalyses the reaction guanosine(1207) in 16S rRNA + S-adenosyl-L-methionine = N(2)-methylguanosine(1207) in 16S rRNA + S-adenosyl-L-homocysteine + H(+). In terms of biological role, specifically methylates the guanine in position 1207 of 16S rRNA in the 30S particle. The polypeptide is Ribosomal RNA small subunit methyltransferase C (Vibrio parahaemolyticus serotype O3:K6 (strain RIMD 2210633)).